A 133-amino-acid chain; its full sequence is Profilin-3 (133 aa).

Belongs to the profilin family. As to quaternary structure, occurs in many kinds of cells as a complex with monomeric actin in a 1:1 ratio.

The protein localises to the cytoplasm. The protein resides in the cytoskeleton. Functionally, binds to actin and affects the structure of the cytoskeleton. At high concentrations, profilin prevents the polymerization of actin, whereas it enhances it at low concentrations. By binding to PIP2, it inhibits the formation of IP3 and DG. This Nicotiana tabacum (Common tobacco) protein is Profilin-3 (PRO3).